A 146-amino-acid polypeptide reads, in one-letter code: Small ribosomal subunit protein uS5 (146 aa).

The S5 DRBM domain occupies 8–71 (FKEVVVNIGR…DDAFKNIIKV (64 aa)).

Belongs to the universal ribosomal protein uS5 family. In terms of assembly, part of the 30S ribosomal subunit. Contacts proteins S4 and S8.

In terms of biological role, with S4 and S12 plays an important role in translational accuracy. Located at the back of the 30S subunit body where it stabilizes the conformation of the head with respect to the body. This is Small ribosomal subunit protein uS5 from Wolinella succinogenes (strain ATCC 29543 / DSM 1740 / CCUG 13145 / JCM 31913 / LMG 7466 / NCTC 11488 / FDC 602W) (Vibrio succinogenes).